The primary structure comprises 203 residues: Small ribosomal subunit protein uS4c (203 aa).

Residues 91–154 (MRLDNIIFRL…KYESIISKNI (64 aa)) form the S4 RNA-binding domain.

Belongs to the universal ribosomal protein uS4 family. Part of the 30S ribosomal subunit. Contacts protein S5. The interaction surface between S4 and S5 is involved in control of translational fidelity.

Its subcellular location is the plastid. It localises to the chloroplast. In terms of biological role, one of the primary rRNA binding proteins, it binds directly to 16S rRNA where it nucleates assembly of the body of the 30S subunit. With S5 and S12 plays an important role in translational accuracy. The polypeptide is Small ribosomal subunit protein uS4c (rps4) (Lopidium struthiopteris (Moss)).